Reading from the N-terminus, the 493-residue chain is Cytochrome P450 710A3 (493 aa).

A helical transmembrane segment spans residues 5–25; it reads VSLFASLTPYLVSALLLFLLL. Position 435 (Cys435) interacts with heme.

Belongs to the cytochrome P450 family. Requires heme as cofactor. In terms of tissue distribution, expressed in stems. Detected in primary root caps and immature petals.

It is found in the membrane. The catalysed reaction is 5-dehydroepisterol + NADPH + O2 + H(+) = ergosta-5,7,22,24(28)-tetraen-3beta-ol + NADP(+) + 2 H2O. Its function is as follows. Required to form the C-22 double bond in the sterol side chain. Possesses in vitro C-22 desaturase activity toward beta-sitosterol and produces stigmasterol. This chain is Cytochrome P450 710A3, found in Arabidopsis thaliana (Mouse-ear cress).